The primary structure comprises 365 residues: Isopentenyl-diphosphate delta-isomerase (365 aa).

A substrate-binding site is contributed by 8-9; the sequence is RK. FMN is bound by residues 67-69, serine 97, and asparagine 126; that span reads SIT. 97-99 is a substrate binding site; that stretch reads SQR. Glutamine 160 provides a ligand contact to substrate. A Mg(2+)-binding site is contributed by glutamate 161. FMN contacts are provided by residues lysine 192, threonine 222, 272–274, and 293–294; these read GIR and AL.

The protein belongs to the IPP isomerase type 2 family. Homooctamer. Dimer of tetramers. It depends on FMN as a cofactor. The cofactor is NADPH. Mg(2+) is required as a cofactor.

It localises to the cytoplasm. It carries out the reaction isopentenyl diphosphate = dimethylallyl diphosphate. Involved in the biosynthesis of isoprenoids. Catalyzes the 1,3-allylic rearrangement of the homoallylic substrate isopentenyl (IPP) to its allylic isomer, dimethylallyl diphosphate (DMAPP). The protein is Isopentenyl-diphosphate delta-isomerase of Methanosarcina barkeri (strain Fusaro / DSM 804).